Here is a 166-residue protein sequence, read N- to C-terminus: NAD(P)H-quinone oxidoreductase subunit I, chloroplastic (166 aa).

4Fe-4S ferredoxin-type domains lie at 55–84 (GRIH…VDWK) and 95–124 (LNYS…MTEE). 8 residues coordinate [4Fe-4S] cluster: cysteine 64, cysteine 67, cysteine 70, cysteine 74, cysteine 104, cysteine 107, cysteine 110, and cysteine 114.

Belongs to the complex I 23 kDa subunit family. NDH is composed of at least 16 different subunits, 5 of which are encoded in the nucleus. [4Fe-4S] cluster serves as cofactor.

It is found in the plastid. The protein resides in the chloroplast thylakoid membrane. It catalyses the reaction a plastoquinone + NADH + (n+1) H(+)(in) = a plastoquinol + NAD(+) + n H(+)(out). The catalysed reaction is a plastoquinone + NADPH + (n+1) H(+)(in) = a plastoquinol + NADP(+) + n H(+)(out). NDH shuttles electrons from NAD(P)H:plastoquinone, via FMN and iron-sulfur (Fe-S) centers, to quinones in the photosynthetic chain and possibly in a chloroplast respiratory chain. The immediate electron acceptor for the enzyme in this species is believed to be plastoquinone. Couples the redox reaction to proton translocation, and thus conserves the redox energy in a proton gradient. The protein is NAD(P)H-quinone oxidoreductase subunit I, chloroplastic of Espeletia timotensis (Andean giant rosette).